The following is a 182-amino-acid chain: Adenylate kinase (182 aa).

12–17 (GAGKGT) lines the ATP pocket. Residues 32-61 (STGDLLRDEVSSGSVLGIKAAEIMNKGELV) are NMP. AMP contacts are provided by residues Thr-33, Arg-38, 59-61 (ELV), 85-88 (GFPR), and Gln-92. The tract at residues 126-132 (ERGRQDD) is LID. Arg-127 is a binding site for ATP. Arg-129 and Arg-140 together coordinate AMP. Ala-168 provides a ligand contact to ATP.

This sequence belongs to the adenylate kinase family. As to quaternary structure, monomer.

The protein resides in the cytoplasm. The enzyme catalyses AMP + ATP = 2 ADP. The protein operates within purine metabolism; AMP biosynthesis via salvage pathway; AMP from ADP: step 1/1. Functionally, catalyzes the reversible transfer of the terminal phosphate group between ATP and AMP. Plays an important role in cellular energy homeostasis and in adenine nucleotide metabolism. This chain is Adenylate kinase, found in Prochlorococcus marinus (strain NATL2A).